A 29-amino-acid polypeptide reads, in one-letter code: Cytochrome b6-f complex subunit 8 (29 aa).

A helical transmembrane segment spans residues 3–23 (LITITWASVMVAFTFSLSLVV).

It belongs to the PetN family. The 4 large subunits of the cytochrome b6-f complex are cytochrome b6, subunit IV (17 kDa polypeptide, PetD), cytochrome f and the Rieske protein, while the 4 small subunits are PetG, PetL, PetM and PetN. The complex functions as a dimer.

It localises to the plastid. It is found in the chloroplast thylakoid membrane. Component of the cytochrome b6-f complex, which mediates electron transfer between photosystem II (PSII) and photosystem I (PSI), cyclic electron flow around PSI, and state transitions. This is Cytochrome b6-f complex subunit 8 from Chaetosphaeridium globosum (Charophycean green alga).